The primary structure comprises 244 residues: Secreted RxLR effector protein RXLR-C05 (244 aa).

A signal peptide spans 1–21 (MRGAFYVATAFLIASSTRTAA). A compositionally biased stretch (basic and acidic residues) spans 37-46 (LPVGDSDTKS). The tract at residues 37-56 (LPVGDSDTKSLPRRSLKGSG) is disordered. Positions 50-68 (RSLKGSGDRLEIPVAEEER) match the RxLR-dEER motif.

This sequence belongs to the RxLR effector family.

The protein localises to the secreted. Its subcellular location is the host cytoplasm. It localises to the host nucleus. Its function is as follows. Secreted effector that suppresses pattern-triggered immunity (PTI) in plant host. In Plasmopara halstedii (Downy mildew of sunflower), this protein is Secreted RxLR effector protein RXLR-C05.